Consider the following 482-residue polypeptide: FAD-linked oxidoreductase alt4 (482 aa).

Residues 53 to 211 (ERPTYLAIVD…LEATFQVYPQ (159 aa)) enclose the FAD-binding PCMH-type domain.

This sequence belongs to the oxygen-dependent FAD-linked oxidoreductase family. FAD serves as cofactor.

It functions in the pathway secondary metabolite biosynthesis. Its function is as follows. FAD-linked oxidoreductase; part of the gene cluster that mediates the biosynthesis of alternapyrone derivatives. Alternapyrone is a decaketide with octa-methylation from methionine on every C2 unit except the third unit. All the domains in the polyketide synthase alt5 are apparently involved in alternapyrone synthesis, that is, the 8 CMeT, 7 KR, 7 DH, and 4 ER reactions in the 9 KS-mediated condensation steps required for alternapyrone synthesis. the alternapyrone produced by alt5 might be intensively modified by cytochrome P450 monooxygenases alt1, alt2 and alt3 and FAD-dependent oxidoreductase alt4 present in the alt gene cluster. The chain is FAD-linked oxidoreductase alt4 from Alternaria solani.